The chain runs to 354 residues: S-adenosylmethionine:tRNA ribosyltransferase-isomerase (354 aa).

This sequence belongs to the QueA family. As to quaternary structure, monomer.

It localises to the cytoplasm. The enzyme catalyses 7-aminomethyl-7-carbaguanosine(34) in tRNA + S-adenosyl-L-methionine = epoxyqueuosine(34) in tRNA + adenine + L-methionine + 2 H(+). The protein operates within tRNA modification; tRNA-queuosine biosynthesis. Its function is as follows. Transfers and isomerizes the ribose moiety from AdoMet to the 7-aminomethyl group of 7-deazaguanine (preQ1-tRNA) to give epoxyqueuosine (oQ-tRNA). In Salmonella typhi, this protein is S-adenosylmethionine:tRNA ribosyltransferase-isomerase.